The primary structure comprises 535 residues: Signal transduction histidine-protein kinase AfsQ2 (535 aa).

Residues Met1–Leu30 are Cytoplasmic-facing. The helical transmembrane segment at Arg31–Tyr52 threads the bilayer. Over Trp53–Asn198 the chain is Extracellular. The helical transmembrane segment at Ser199 to Ala219 threads the bilayer. At Gln220 to Val535 the chain is on the cytoplasmic side. The region spanning Thr224 to Ala276 is the HAMP domain. The 220-residue stretch at Asp291–Pro510 folds into the Histidine kinase domain. At His294 the chain carries Phosphohistidine. The interval Glu493–Val535 is disordered. The segment covering Ala514–Glu525 has biased composition (acidic residues). Basic and acidic residues predominate over residues Asp526–Val535.

The protein resides in the cell membrane. The catalysed reaction is ATP + protein L-histidine = ADP + protein N-phospho-L-histidine.. Forms part of a two-component regulatory system AfsQ1/AfsQ2 involved in secondary metabolism. May activate AfsQ1 by phosphorylation. The sequence is that of Signal transduction histidine-protein kinase AfsQ2 (afsQ2) from Streptomyces coelicolor (strain ATCC BAA-471 / A3(2) / M145).